We begin with the raw amino-acid sequence, 65 residues long: Protein translocase subunit SecE (65 aa).

Residues 1-34 lie on the Cytoplasmic side of the membrane; sequence MEKLRKFFREVIAEAKKISWPSRKELLTSFGVVL. A helical membrane pass occupies residues 35–51; the sequence is VILAVTSVYFFVLDFIF. At 52-65 the chain is on the extracellular side; the sequence is SGVVSAIFKALGIG.

Belongs to the SecE/SEC61-gamma family. In terms of assembly, component of the Sec protein translocase complex. Heterotrimer consisting of SecY, SecE and SecG subunits. The heterotrimers can form oligomers, although 1 heterotrimer is thought to be able to translocate proteins. Interacts with SecDF, and other proteins may be involved. The channel interacts with SecA via subunit SecY.

It is found in the cell inner membrane. Essential subunit of the protein translocation channel SecYEG. Clamps together the 2 halves of SecY. May contact the channel plug during translocation. This Thermotoga maritima (strain ATCC 43589 / DSM 3109 / JCM 10099 / NBRC 100826 / MSB8) protein is Protein translocase subunit SecE.